Here is a 252-residue protein sequence, read N- to C-terminus: Triosephosphate isomerase (252 aa).

Residue 10 to 12 (NWK) coordinates substrate. Residue His-96 is the Electrophile of the active site. Catalysis depends on Glu-168, which acts as the Proton acceptor. Substrate is bound by residues Gly-174, Ser-214, and 235–236 (GG).

Belongs to the triosephosphate isomerase family. In terms of assembly, homodimer.

Its subcellular location is the cytoplasm. It carries out the reaction D-glyceraldehyde 3-phosphate = dihydroxyacetone phosphate. The protein operates within carbohydrate biosynthesis; gluconeogenesis. Its pathway is carbohydrate degradation; glycolysis; D-glyceraldehyde 3-phosphate from glycerone phosphate: step 1/1. Involved in the gluconeogenesis. Catalyzes stereospecifically the conversion of dihydroxyacetone phosphate (DHAP) to D-glyceraldehyde-3-phosphate (G3P). This chain is Triosephosphate isomerase, found in Streptococcus pyogenes serotype M1.